A 600-amino-acid chain; its full sequence is Proline--tRNA ligase (600 aa).

The protein belongs to the class-II aminoacyl-tRNA synthetase family. ProS type 1 subfamily. Homodimer.

The protein localises to the cytoplasm. It carries out the reaction tRNA(Pro) + L-proline + ATP = L-prolyl-tRNA(Pro) + AMP + diphosphate. Catalyzes the attachment of proline to tRNA(Pro) in a two-step reaction: proline is first activated by ATP to form Pro-AMP and then transferred to the acceptor end of tRNA(Pro). As ProRS can inadvertently accommodate and process non-cognate amino acids such as alanine and cysteine, to avoid such errors it has two additional distinct editing activities against alanine. One activity is designated as 'pretransfer' editing and involves the tRNA(Pro)-independent hydrolysis of activated Ala-AMP. The other activity is designated 'posttransfer' editing and involves deacylation of mischarged Ala-tRNA(Pro). The misacylated Cys-tRNA(Pro) is not edited by ProRS. The sequence is that of Proline--tRNA ligase from Synechococcus elongatus (strain ATCC 33912 / PCC 7942 / FACHB-805) (Anacystis nidulans R2).